The following is a 412-amino-acid chain: 43 kDa receptor-associated protein of the synapse (412 aa).

A lipid anchor (N-myristoyl glycine) is attached at Gly-2. 7 TPR repeats span residues 6-39, 83-116, 123-156, 163-196, 206-239, 246-279, and 286-319; these read TKQQ…SSDL, LESY…PGTR, GQVS…AHNN, CRVC…VNNY, AMSQ…ALQH, ALCL…MTEI, and VQAL…AEEV. The residue at position 196 (Tyr-196) is a Phosphotyrosine. The RING-type zinc finger occupies 363–403; it reads CGLCGESIGEKNSRLQALPCSHIFHLRCLQNNGTRSCPNCR. A Phosphoserine modification is found at Ser-405.

The protein belongs to the RAPsyn family. Post-translationally, ubiquitinated by the BCR(KLHL8) complex, leading to its degradation.

The protein localises to the cell membrane. It localises to the postsynaptic cell membrane. The protein resides in the cytoplasm. Its subcellular location is the cytoskeleton. In terms of biological role, postsynaptic protein required for clustering of nicotinic acetylcholine receptors (nAChRs) at the neuromuscular junction. It may link the receptor to the underlying postsynaptic cytoskeleton, possibly by direct association with actin or spectrin. In Homo sapiens (Human), this protein is 43 kDa receptor-associated protein of the synapse (RAPSN).